Here is a 589-residue protein sequence, read N- to C-terminus: Phosphoenolpyruvate carboxykinase [GTP] (589 aa).

Substrate-binding positions include Arg-75 and 207 to 209; that span reads YGG. Mn(2+) is bound by residues Lys-216 and His-236. Ser-258 contributes to the substrate binding site. Residue 259–264 participates in GTP binding; that stretch reads ASGKTN. Ser-260 is a catalytic residue. Asp-287 contributes to the Mn(2+) binding site. Position 374 to 376 (374 to 376) interacts with substrate; sequence NSR. GTP contacts are provided by residues Arg-376, Arg-407, and 500–503; that span reads FAEN.

Belongs to the phosphoenolpyruvate carboxykinase [GTP] family. Mn(2+) is required as a cofactor.

The protein resides in the cytoplasm. The catalysed reaction is oxaloacetate + GTP = phosphoenolpyruvate + GDP + CO2. The protein operates within carbohydrate biosynthesis; gluconeogenesis. Its function is as follows. Catalyzes the conversion of oxaloacetate (OAA) to phosphoenolpyruvate (PEP), the rate-limiting step in the metabolic pathway that produces glucose from lactate and other precursors derived from the citric acid cycle. This is Phosphoenolpyruvate carboxykinase [GTP] from Thermoplasma volcanium (strain ATCC 51530 / DSM 4299 / JCM 9571 / NBRC 15438 / GSS1).